The following is a 389-amino-acid chain: Phospho-N-acetylmuramoyl-pentapeptide-transferase (389 aa).

11 consecutive transmembrane segments (helical) span residues 25 to 45 (RAVM…PWVI), 74 to 94 (MGGV…CDWG), 97 to 117 (FIWV…VDDY), 134 to 154 (FFWQ…SVSE), 167 to 187 (WIEG…VPFF), 190 to 210 (VSYP…IVGS), 222 to 242 (GLVI…AYVM), 259 to 279 (AGEL…FLWF), 286 to 306 (VFMG…VAVI), 311 to 331 (IVLF…MLQV), and 366 to 386 (QVTV…LSSL).

It belongs to the glycosyltransferase 4 family. MraY subfamily. The cofactor is Mg(2+).

The protein resides in the cell inner membrane. It carries out the reaction UDP-N-acetyl-alpha-D-muramoyl-L-alanyl-gamma-D-glutamyl-meso-2,6-diaminopimeloyl-D-alanyl-D-alanine + di-trans,octa-cis-undecaprenyl phosphate = di-trans,octa-cis-undecaprenyl diphospho-N-acetyl-alpha-D-muramoyl-L-alanyl-D-glutamyl-meso-2,6-diaminopimeloyl-D-alanyl-D-alanine + UMP. Its pathway is cell wall biogenesis; peptidoglycan biosynthesis. Its function is as follows. Catalyzes the initial step of the lipid cycle reactions in the biosynthesis of the cell wall peptidoglycan: transfers peptidoglycan precursor phospho-MurNAc-pentapeptide from UDP-MurNAc-pentapeptide onto the lipid carrier undecaprenyl phosphate, yielding undecaprenyl-pyrophosphoryl-MurNAc-pentapeptide, known as lipid I. This is Phospho-N-acetylmuramoyl-pentapeptide-transferase from Cupriavidus metallidurans (strain ATCC 43123 / DSM 2839 / NBRC 102507 / CH34) (Ralstonia metallidurans).